Reading from the N-terminus, the 420-residue chain is MGHETEISKRYQVAKERYQAIGVDTENALKTLKDIKISMHCWQGDDVKGFLNPDGELTGGIMATGNYPGAAHTPKQLRQDLEKAYSLIPGKHKLNLHAIYVDTDEKVDLNEIEPKHFTPWVEWAKEQGLGLDFNPTFFSHPMFKDNYTLASPDKEVRDFWIEHGKRSRKISEYFGKELGQTSINNFWVPDGIKDCPIDRYTPRKRLMEALDEVFAEKLDEKYTQEAVESKLFGLGAEAYTVGSHEFYMGYGITRDKLICLDAGHFHPTEVISNKLSSLALFSKGVMLHVSRPVRWDSDHVVIMDDELIEIGRELVRNDLLGITNIGLDFFDATINRIAAWVVGTRNTQKSLLKALLEPTADLKKMELENDFTSRMAITEELKDFPFGDVWNYFCEINGVPVGLDWLKEVKAYEEDVLLKR.

Positions 264, 296, and 298 each coordinate Mn(2+).

The protein belongs to the rhamnose isomerase family. Mn(2+) is required as a cofactor.

It localises to the cytoplasm. It carries out the reaction L-rhamnopyranose = L-rhamnulose. The protein operates within carbohydrate degradation; L-rhamnose degradation; glycerone phosphate from L-rhamnose: step 1/3. In terms of biological role, catalyzes the interconversion of L-rhamnose and L-rhamnulose. This chain is L-rhamnose isomerase, found in Listeria monocytogenes serotype 4b (strain F2365).